We begin with the raw amino-acid sequence, 173 residues long: Translocon-associated protein subunit delta (173 aa).

A signal peptide spans 1-23; sequence MAAMASFGALALLLLSGLSCCSA. The Lumenal portion of the chain corresponds to 24 to 144; the sequence is EACLEPQITP…SVDHRGTWNG (121 aa). Residues C26 and C57 are joined by a disulfide bond. Residue K73 forms a Glycyl lysine isopeptide (Lys-Gly) (interchain with G-Cter in ubiquitin) linkage. A helical membrane pass occupies residues 145–165; the sequence is PWVSTEVLAAAIGIVIYYLAF. Residues 166–173 are Cytoplasmic-facing; the sequence is SAKSHIQA.

It belongs to the TRAP-delta family. Heterotetramer of TRAP-alpha, TRAP-beta, TRAP-delta and TRAP-gamma.

Its subcellular location is the endoplasmic reticulum membrane. Functionally, TRAP proteins are part of a complex whose function is to bind calcium to the ER membrane and thereby regulate the retention of ER resident proteins. In Rattus norvegicus (Rat), this protein is Translocon-associated protein subunit delta (Ssr4).